The sequence spans 72 residues: Kappa-conotoxin PVIIA (72 aa).

An N-terminal signal peptide occupies residues 1–22 (MKLTCVVIVVVLFLTACQLITA). Residues 23-45 (DDSRRTQKHRALRSTTKLSLSTR) constitute a propeptide that is removed on maturation. 3 cysteine pairs are disulfide-bonded: Cys-46–Cys-61, Cys-53–Cys-65, and Cys-60–Cys-71. Pro-49 is subject to 4-hydroxyproline.

It belongs to the conotoxin O1 superfamily. Post-translationally, this toxin is not amidated at the C-terminal Val residue. In terms of tissue distribution, expressed by the venom duct.

It is found in the secreted. Its function is as follows. Kappa-conotoxins bind and inhibit voltage-gated potassium channels (Kv). This toxin inhibits the drosophila Shaker channel (IC(50)=57-80 nM). In vivo, when tested in fish, this toxin induces hyperactivity, followed by continuous contraction and extension of major fins, without immobilization or death. Injection of this peptide together with the delta-conotoxin PVIA causes the sudden tetanus of prey (STOP) syndrome, which is a single, lethal 'fin-pop' in envenomed fish. When tested in mice, induces hyperactivity. This Conus purpurascens (Purple cone) protein is Kappa-conotoxin PVIIA.